The sequence spans 134 residues: Large ribosomal subunit protein uL16c (134 aa).

Residues 1-22 (MLSPKRTRFRKQHRGRMKGISH) are disordered.

It belongs to the universal ribosomal protein uL16 family. In terms of assembly, part of the 50S ribosomal subunit.

It localises to the plastid. Its subcellular location is the chloroplast. The sequence is that of Large ribosomal subunit protein uL16c from Nicotiana tomentosiformis (Tobacco).